The sequence spans 352 residues: Phosphate acyltransferase (352 aa).

It belongs to the PlsX family. Homodimer. Probably interacts with PlsY.

The protein localises to the cytoplasm. The enzyme catalyses a fatty acyl-[ACP] + phosphate = an acyl phosphate + holo-[ACP]. It participates in lipid metabolism; phospholipid metabolism. Catalyzes the reversible formation of acyl-phosphate (acyl-PO(4)) from acyl-[acyl-carrier-protein] (acyl-ACP). This enzyme utilizes acyl-ACP as fatty acyl donor, but not acyl-CoA. In Bordetella bronchiseptica (strain ATCC BAA-588 / NCTC 13252 / RB50) (Alcaligenes bronchisepticus), this protein is Phosphate acyltransferase.